A 195-amino-acid polypeptide reads, in one-letter code: E3 ubiquitin-protein ligase ZNRF1 (195 aa).

The segment covering M1 to R10 has biased composition (polar residues). 2 disordered regions span residues M1–A36 and P61–G84. G2 carries the N-myristoyl glycine lipid modification. Low complexity predominate over residues V18–S29. The segment at C152–P193 adopts an RING-type; atypical zinc-finger fold.

It is found in the endosome. Its subcellular location is the lysosome. The protein resides in the membrane. It carries out the reaction S-ubiquitinyl-[E2 ubiquitin-conjugating enzyme]-L-cysteine + [acceptor protein]-L-lysine = [E2 ubiquitin-conjugating enzyme]-L-cysteine + N(6)-ubiquitinyl-[acceptor protein]-L-lysine.. Its pathway is protein modification; protein ubiquitination. Functionally, E3 ubiquitin-protein ligase that plays a role in neuron cells differentiation. Plays a role in the establishment and maintenance of neuronal transmission and plasticity. The polypeptide is E3 ubiquitin-protein ligase ZNRF1 (znrf1) (Xenopus tropicalis (Western clawed frog)).